A 340-amino-acid chain; its full sequence is Glycerol-3-phosphate dehydrogenase [NAD(P)+] (340 aa).

NADPH contacts are provided by serine 11, tryptophan 12, arginine 33, and lysine 106. Sn-glycerol 3-phosphate-binding residues include lysine 106, glycine 137, and serine 139. Alanine 141 serves as a coordination point for NADPH. Sn-glycerol 3-phosphate is bound by residues lysine 192, aspartate 245, serine 255, arginine 256, and asparagine 257. Residue lysine 192 is the Proton acceptor of the active site. Residue arginine 256 participates in NADPH binding. NADPH contacts are provided by valine 280 and glutamate 282.

Belongs to the NAD-dependent glycerol-3-phosphate dehydrogenase family.

The protein localises to the cytoplasm. The catalysed reaction is sn-glycerol 3-phosphate + NAD(+) = dihydroxyacetone phosphate + NADH + H(+). It catalyses the reaction sn-glycerol 3-phosphate + NADP(+) = dihydroxyacetone phosphate + NADPH + H(+). It participates in membrane lipid metabolism; glycerophospholipid metabolism. In terms of biological role, catalyzes the reduction of the glycolytic intermediate dihydroxyacetone phosphate (DHAP) to sn-glycerol 3-phosphate (G3P), the key precursor for phospholipid synthesis. The polypeptide is Glycerol-3-phosphate dehydrogenase [NAD(P)+] (Bacillus anthracis (strain A0248)).